A 444-amino-acid chain; its full sequence is Aflatoxin biosynthesis regulatory protein (444 aa).

Residues 1–26 are disordered; that stretch reads MVDHISPRASPGPIRSSQTRRARKLR. Residues 29–56 constitute a DNA-binding region (zn(2)-C6 fungal-type); the sequence is CTSCASSKVRCTKEKPACARCIERGLAC. The disordered stretch occupies residues 64-167; the sequence is MGRNPRAPSP…QGLGGDLAGQ (104 aa). A compositionally biased stretch (basic residues) spans 106–116; that stretch reads TQAHTHAHSHP. Residues 120–130 are compositionally biased toward low complexity; the sequence is PQSHPQSNQPP. The span at 136–149 shows a compositional bias: polar residues; that stretch reads PNGSSSVSAIFSHQ.

Its subcellular location is the nucleus. It functions in the pathway mycotoxin biosynthesis; aflatoxin biosynthesis. In terms of biological role, involved in the regulation of aflatoxin biosynthesis. May have a role in nitrate assimilation and sclerotial morphogenesis. The polypeptide is Aflatoxin biosynthesis regulatory protein (aflR) (Aspergillus parasiticus).